The sequence spans 510 residues: Probable cytochrome P450 312a1 (510 aa).

Residue C455 participates in heme binding.

The protein belongs to the cytochrome P450 family. It depends on heme as a cofactor.

It localises to the endoplasmic reticulum membrane. It is found in the microsome membrane. Its function is as follows. May be involved in the metabolism of insect hormones and in the breakdown of synthetic insecticides. This Drosophila melanogaster (Fruit fly) protein is Probable cytochrome P450 312a1 (Cyp312a1).